The primary structure comprises 166 residues: uncharacterized protein (166 aa).

4 helical membrane passes run 7–27, 30–50, 69–89, and 92–112; these read VLFKISFLLIILVSLILSLFY, FLFAFLLSFILFGITWAYCYI, IETLRFLFILMIISVFIKSLL, and NSFFPYISFLLSNLILGLVLF.

The protein to M.jannaschii MJ0795.1 and MJ0785.1.

The protein localises to the cell membrane. This is an uncharacterized protein from Methanocaldococcus jannaschii (strain ATCC 43067 / DSM 2661 / JAL-1 / JCM 10045 / NBRC 100440) (Methanococcus jannaschii).